We begin with the raw amino-acid sequence, 1187 residues long: BAI1-associated protein 3 (1187 aa).

The tract at residues 55–81 is disordered; that stretch reads SFRRRTEQDPGSASADPQEPATGAWKP. Residues 176–335 enclose the C2 1 domain; the sequence is SLEEHTEAIE…VKSARANGTA (160 aa). Ca(2+) is bound by residues Asp211, Asp217, Asp295, and Asp297. An MHD1 domain is found at 663-784; the sequence is FELYLTLADL…EATLFYTELL (122 aa). One can recognise an MHD2 domain in the interval 888–996; sequence DEAVAPLMKY…CSTRECIEQF (109 aa). The 127-residue stretch at 1010 to 1136 folds into the C2 2 domain; the sequence is RFGRLSVRCH…GVARPQVGGG (127 aa). Residues Leu1040, Asp1041, Asp1047, Asp1105, Asp1107, Ser1110, and Asp1113 each contribute to the Ca(2+) site.

It belongs to the unc-13 family. In terms of assembly, interacts with ADGRB1; this interaction is direct. Interacts with endosomal SNARE proteins VAMP3, VAMP4, STX6 and STX16; this interaction is increased in the presence of calcium. The cofactor is Ca(2+). Predominantly expressed in brain. Also expressed in nonneural tissues such as breast and testes epithelium.

The protein localises to the cytoplasm. It localises to the cytosol. It is found in the recycling endosome membrane. The protein resides in the late endosome membrane. Its subcellular location is the golgi apparatus. The protein localises to the trans-Golgi network membrane. It localises to the cell membrane. Its function is as follows. Functions in endosome to Golgi retrograde transport. In response to calcium influx, may interact with SNARE fusion receptors and membrane phospholipids to mediate endosome fusion with the trans-Golgi network. By promoting the recycling of secretory vesicle transmembrane proteins, it indirectly controls dense-core secretory vesicle biogenesis, maturation and their ability to mediate the constitutive and regulated secretion of neurotransmitters and hormones. May regulate behavior and food intake by controlling calcium-stimulated exocytosis of neurotransmitters including NPY and serotonin and hormones like insulin. Proposed to play a role in hypothalamic neuronal firing by modulating gamma-aminobutyric acid (GABA)ergic inhibitory neurotransmission. The polypeptide is BAI1-associated protein 3 (Homo sapiens (Human)).